The primary structure comprises 108 residues: Ig light chain C region (108 aa).

The Ig-like domain occupies 7–102 (PTVSIYCPSL…LTPALAKSFQ (96 aa)). Disulfide bonds link Cys-13/Cys-106 and Cys-28/Cys-86.

The protein is Ig light chain C region of Aquarana catesbeiana (American bullfrog).